We begin with the raw amino-acid sequence, 389 residues long: Metal tolerance protein 2 (389 aa).

The Cytoplasmic segment spans residues 1–81 (MGFRLAHLAA…GGEASERIFR (81 aa)). Residues 82 to 102 (LGLAADVVLTVGKAVTGYLSG) form a helical membrane-spanning segment. Residues 103 to 104 (ST) are Vacuolar-facing. A helical transmembrane segment spans residues 105–125 (AIAADAAHSLSDIVLSGVALL). Topologically, residues 126-148 (SYKAAKAPRDKEHPYGHGKFESL) are cytoplasmic. Residues 149–169 (GALGISSMLLVTAGGIAWHAF) form a helical membrane-spanning segment. Residues 170–206 (DVLQGVMSSAPDIIGNVSHAHHSHGSSGHHHGIDLEH) are Vacuolar-facing. Residues 207–227 (PILALSVTAFAISVKEGLYWI) form a helical membrane-spanning segment. The Cytoplasmic portion of the chain corresponds to 228–250 (TKRAGEKEGSGLMKANAWHHRSD). The helical transmembrane segment at 251-271 (AISSVVALLGVGGSILGVPYL) threads the bilayer. The Vacuolar segment spans residues 272–275 (DPLA). A helical transmembrane segment spans residues 276-296 (GLVVSGMILKAGVHTGYESVL). The Cytoplasmic portion of the chain corresponds to 297–389 (ELVDAAVDPS…SLQPLNQNAL (93 aa)).

This sequence belongs to the cation diffusion facilitator (CDF) transporter (TC 2.A.4) family. SLC30A subfamily.

Its subcellular location is the vacuole membrane. Its function is as follows. Involved in sequestration of excess metal in the cytoplasm into vacuoles to maintain metal homeostasis. This Oryza sativa subsp. japonica (Rice) protein is Metal tolerance protein 2 (MTP2).